The following is a 1222-amino-acid chain: Protein SCP160 (1222 aa).

Residues 1–12 show a composition bias toward polar residues; that stretch reads MSEEQTAIDSPP. Positions 1 to 59 are disordered; sequence MSEEQTAIDSPPSTVEGSVETVTTIDSPSTTASTIAATAEEHPQLEKKPTPLPSLKDLP. The segment covering 13 to 38 has biased composition (low complexity); sequence STVEGSVETVTTIDSPSTTASTIAAT. The segment covering 39–49 has biased composition (basic and acidic residues); the sequence is AEEHPQLEKKP. Residue threonine 50 is modified to Phosphothreonine. Serine 54, serine 63, serine 85, serine 87, and serine 89 each carry phosphoserine. The disordered stretch occupies residues 79–98; sequence KPAVSNSPSPSPSAPSLTTG. The KH 1 domain maps to 177 to 249; sequence PINAVIEVPS…ESVNLAKAKI (73 aa). Serine 630 carries the post-translational modification Phosphoserine. KH domains are found at residues 634–702, 712–771, 782–851, 861–929, and 939–1001; these read KSKM…KKYL, IITK…HEEL, GHKM…AKRV, FVTE…VEEI, and SVTK…EKKI. Serine 1112 carries the post-translational modification Phosphoserine. Residues 1153–1216 enclose the KH 7 domain; the sequence is YAGYVWGADT…AGVEKAGEMV (64 aa).

The protein resides in the endoplasmic reticulum membrane. The protein localises to the nucleus membrane. Its function is as follows. Involved in the control of mitotic chromosome transmission. Required during cell division for faithful partitioning of the ER-nuclear envelope membranes which, in S.cerevisiae, enclose the duplicated chromosomes. The sequence is that of Protein SCP160 (SCP160) from Saccharomyces cerevisiae (strain ATCC 204508 / S288c) (Baker's yeast).